A 170-amino-acid polypeptide reads, in one-letter code: Putative 4-hydroxy-4-methyl-2-oxoglutarate aldolase (170 aa).

Substrate contacts are provided by residues Gly-81 to Ile-84 and Arg-103. Residue Asp-104 coordinates a divalent metal cation.

Belongs to the class II aldolase/RraA-like family. As to quaternary structure, homotrimer. Requires a divalent metal cation as cofactor.

The catalysed reaction is 4-hydroxy-4-methyl-2-oxoglutarate = 2 pyruvate. The enzyme catalyses oxaloacetate + H(+) = pyruvate + CO2. Its function is as follows. Catalyzes the aldol cleavage of 4-hydroxy-4-methyl-2-oxoglutarate (HMG) into 2 molecules of pyruvate. Also contains a secondary oxaloacetate (OAA) decarboxylase activity due to the common pyruvate enolate transition state formed following C-C bond cleavage in the retro-aldol and decarboxylation reactions. This Corynebacterium efficiens (strain DSM 44549 / YS-314 / AJ 12310 / JCM 11189 / NBRC 100395) protein is Putative 4-hydroxy-4-methyl-2-oxoglutarate aldolase.